The following is a 150-amino-acid chain: MKLILTAAIDNLGVPGDIVEVKAGYGRNYLLPRGYAVPATRGAEKQVQDLKRAQEARAIRDADRAREVKEQLANLEGVSVAVRTANNGKLFGSVKPNDVAQAVVAAGGPELDKHSIDMTKGFVKSTGKYSVDVKLHEDIHGTINFEVVSQ.

Belongs to the bacterial ribosomal protein bL9 family.

In terms of biological role, binds to the 23S rRNA. The protein is Large ribosomal subunit protein bL9 of Corynebacterium kroppenstedtii (strain DSM 44385 / JCM 11950 / CIP 105744 / CCUG 35717).